Consider the following 216-residue polypeptide: Phosphorylated carbohydrates phosphatase TM_1254 (216 aa).

Catalysis depends on Asp7, which acts as the Nucleophile.

It belongs to the HAD-like hydrolase superfamily. Co(2+) serves as cofactor. Mg(2+) is required as a cofactor. The cofactor is Mn(2+). It depends on Ni(2+) as a cofactor.

Its function is as follows. Displays high phosphatase activity toward erythrose 4-phosphate, fructose 6-phosphate, 2-deoxyglucose 6-phosphate, and mannose 6-phosphate. May have a role in the intracellular metabolism of many phosphorylated carbohydrates. The sequence is that of Phosphorylated carbohydrates phosphatase TM_1254 from Thermotoga maritima (strain ATCC 43589 / DSM 3109 / JCM 10099 / NBRC 100826 / MSB8).